The primary structure comprises 500 residues: Serine carboxypeptidase 3 (500 aa).

Positions 1 to 21 are cleaved as a signal peptide; it reads MATTPRLASLLLLLALCAAAA. Positions 22 to 73 are excised as a propeptide; that stretch reads GALRLPPDASFPGAQAERLIRALNLLPGRPRRGLGAGAEDVAPGQLLERRVT. Intrachain disulfides connect Cys-126/Cys-366, Cys-294/Cys-309, and Cys-332/Cys-337. Residue Asn-144 is glycosylated (N-linked (GlcNAc...) asparagine). The active site involves Ser-216. The active site involves Asp-404. Residue Cys-407 participates in substrate binding. The active site involves His-461. A propeptide spanning residues 485–500 is cleaved from the precursor; it reads ESVPEEEPATTFYAAI.

This sequence belongs to the peptidase S10 family. In terms of assembly, monomer.

The catalysed reaction is Release of a C-terminal amino acid with broad specificity.. This chain is Serine carboxypeptidase 3 (CBP3), found in Triticum aestivum (Wheat).